Consider the following 148-residue polypeptide: Ubiquitin-conjugating enzyme E2 5B (148 aa).

Positions 1 to 147 (MASKRILKEL…ARSWTQKYAM (147 aa)) constitute a UBC core domain. The Glycyl thioester intermediate role is filled by Cys-85.

The protein belongs to the ubiquitin-conjugating enzyme family.

It carries out the reaction S-ubiquitinyl-[E1 ubiquitin-activating enzyme]-L-cysteine + [E2 ubiquitin-conjugating enzyme]-L-cysteine = [E1 ubiquitin-activating enzyme]-L-cysteine + S-ubiquitinyl-[E2 ubiquitin-conjugating enzyme]-L-cysteine.. It participates in protein modification; protein ubiquitination. Functionally, E2 conjugating enzyme that associates with the E3 ubiquitin-protein ligase EL5 to mediate ubiquitination of target proteins. This Oryza sativa subsp. japonica (Rice) protein is Ubiquitin-conjugating enzyme E2 5B (UBC5B).